The chain runs to 190 residues: NADH-quinone oxidoreductase subunit B (190 aa).

Cys39, Cys40, Cys104, and Cys135 together coordinate [4Fe-4S] cluster.

This sequence belongs to the complex I 20 kDa subunit family. NDH-1 is composed of 14 different subunits. Subunits NuoB, C, D, E, F, and G constitute the peripheral sector of the complex. It depends on [4Fe-4S] cluster as a cofactor.

It localises to the cell inner membrane. It catalyses the reaction a quinone + NADH + 5 H(+)(in) = a quinol + NAD(+) + 4 H(+)(out). Functionally, NDH-1 shuttles electrons from NADH, via FMN and iron-sulfur (Fe-S) centers, to quinones in the respiratory chain. The immediate electron acceptor for the enzyme in this species is believed to be a menaquinone. Couples the redox reaction to proton translocation (for every two electrons transferred, four hydrogen ions are translocated across the cytoplasmic membrane), and thus conserves the redox energy in a proton gradient. In Chlorobium chlorochromatii (strain CaD3), this protein is NADH-quinone oxidoreductase subunit B.